The following is a 65-amino-acid chain: Protein C13 (65 aa).

This sequence belongs to the poxviridae C13 protein family.

The protein is Protein C13 of Vaccinia virus (strain Copenhagen) (VACV).